The following is a 222-amino-acid chain: MDPDFWHERWRQKQTGFHQTQVNPLLETFWPRCVGPARPRVFVPLCGKSLDMVWLRNRGHSVLGNELSPIAVDEFFRENGLSAVTTPLGNGFVRAESGDISLLCGNYFDLTPDLIGKVGAIYDRAALVAMPPEMQGRYAEQVFRLLPETPPMLLITLEYDAEEMSGPPFPVPEEAVVRLFGPAYRIELLSARDALEGNPQLRAKGLSRLTEKAYWLRAQASA.

S-adenosyl-L-methionine-binding residues include W10, L45, E66, and R124.

The protein belongs to the class I-like SAM-binding methyltransferase superfamily. TPMT family.

Its subcellular location is the cytoplasm. The catalysed reaction is S-adenosyl-L-methionine + a thiopurine = S-adenosyl-L-homocysteine + a thiopurine S-methylether.. In Methylococcus capsulatus (strain ATCC 33009 / NCIMB 11132 / Bath), this protein is Thiopurine S-methyltransferase.